The chain runs to 326 residues: Beta-ketoacyl-[acyl-carrier-protein] synthase III (326 aa).

Active-site residues include cysteine 112 and histidine 251. The ACP-binding stretch occupies residues glutamine 252 to arginine 256. The active site involves asparagine 281.

Belongs to the thiolase-like superfamily. FabH family. Homodimer.

It is found in the cytoplasm. It carries out the reaction malonyl-[ACP] + acetyl-CoA + H(+) = 3-oxobutanoyl-[ACP] + CO2 + CoA. The protein operates within lipid metabolism; fatty acid biosynthesis. Functionally, catalyzes the condensation reaction of fatty acid synthesis by the addition to an acyl acceptor of two carbons from malonyl-ACP. Catalyzes the first condensation reaction which initiates fatty acid synthesis and may therefore play a role in governing the total rate of fatty acid production. Possesses both acetoacetyl-ACP synthase and acetyl transacylase activities. Its substrate specificity determines the biosynthesis of branched-chain and/or straight-chain of fatty acids. In Clostridium botulinum (strain 657 / Type Ba4), this protein is Beta-ketoacyl-[acyl-carrier-protein] synthase III.